Consider the following 347-residue polypeptide: Probable arabinogalactan endo-beta-1,4-galactanase A (347 aa).

The first 16 residues, 1 to 16, serve as a signal peptide directing secretion; it reads MLFSYLLATLPLLANA. The active-site Proton donor is Glu150. The active-site Nucleophile is Glu260.

Belongs to the glycosyl hydrolase 53 family.

It localises to the secreted. The enzyme catalyses The enzyme specifically hydrolyzes (1-&gt;4)-beta-D-galactosidic linkages in type I arabinogalactans.. Its function is as follows. Endogalactanase involved in the degradation of plant cell wall polysaccharides, and more particularly of hairy regions of pectin. The polypeptide is Probable arabinogalactan endo-beta-1,4-galactanase A (galA) (Aspergillus oryzae (strain ATCC 42149 / RIB 40) (Yellow koji mold)).